We begin with the raw amino-acid sequence, 350 residues long: MRASQSPMLDPRARHLLRTLIARYIRDGEPVGSKTLAQHAGLDVSPATIRNILADLEDIGLLSSPHTSAGRVPTAHGYRVFVDSLVQMQPPGEEEVRRLRAELASSNGTQSLLGSASQMLSAMSHFVGVVSAPRREQFAFRHIDFVPLDARRVLAILVFADNEVQNRVIEPRRAYEPAELERVANYLNAQFAGRALSDIRASLLRELRLAKNEMEQLLAHSVDLASEALVPADDDGMVMAGQTRLMGVQDLSDLDRLRELFEAFASKREILQLLERTIQAPGVRIFIGEETGMVSLDDVSLVTAPYTAGGQVLGVLGVIGPKRMAYDRVIPLVQTAAQMLGAAMEPPGTR.

Belongs to the HrcA family.

Its function is as follows. Negative regulator of class I heat shock genes (grpE-dnaK-dnaJ and groELS operons). Prevents heat-shock induction of these operons. The polypeptide is Heat-inducible transcription repressor HrcA (Xanthomonas campestris pv. campestris (strain ATCC 33913 / DSM 3586 / NCPPB 528 / LMG 568 / P 25)).